A 165-amino-acid polypeptide reads, in one-letter code: Large ribosomal subunit protein uL10 (165 aa).

This sequence belongs to the universal ribosomal protein uL10 family. Part of the ribosomal stalk of the 50S ribosomal subunit. The N-terminus interacts with L11 and the large rRNA to form the base of the stalk. The C-terminus forms an elongated spine to which L12 dimers bind in a sequential fashion forming a multimeric L10(L12)X complex.

Forms part of the ribosomal stalk, playing a central role in the interaction of the ribosome with GTP-bound translation factors. This chain is Large ribosomal subunit protein uL10, found in Hamiltonella defensa subsp. Acyrthosiphon pisum (strain 5AT).